The sequence spans 289 residues: MSTRIAFLKGHGTENDFVIVPDPENALDLPPAAVAALCDRRAGLGGDGLLHVVRSAAHPEARGMAAEAEWFMDYRNGDGSVAEMCGNGVRVFARYLQHAGHVTEGDLAVATRGGVKTVHIAKNGDVTVGMGRALLPAGDVEVSVGEREWPARNVNMGNPHAVAFVADLDHAGDLYAPPSHAPAGAYPDGVNVEFVVDRGPRHVAMRVHERGSGETRSCGTGACAVAVATARRDGLDPAATGTPATYTVDVPGGTLVITERPDGEIEMTGPAVIVAEGEFDSAWLEGVLA.

Residues N15 and N76 each contribute to the substrate site. Residue C85 is the Proton donor of the active site. Substrate contacts are provided by residues 86–87 (GN), N158, N191, and 209–210 (ER). The active-site Proton acceptor is the C218. 219–220 (GT) serves as a coordination point for substrate.

It belongs to the diaminopimelate epimerase family. Homodimer.

The protein resides in the cytoplasm. It carries out the reaction (2S,6S)-2,6-diaminopimelate = meso-2,6-diaminopimelate. It participates in amino-acid biosynthesis; L-lysine biosynthesis via DAP pathway; DL-2,6-diaminopimelate from LL-2,6-diaminopimelate: step 1/1. In terms of biological role, catalyzes the stereoinversion of LL-2,6-diaminopimelate (L,L-DAP) to meso-diaminopimelate (meso-DAP), a precursor of L-lysine and an essential component of the bacterial peptidoglycan. This chain is Diaminopimelate epimerase, found in Streptomyces coelicolor (strain ATCC BAA-471 / A3(2) / M145).